The following is a 374-amino-acid chain: Methionine import ATP-binding protein MetN 2 (374 aa).

Residues 32–271 (VRFVGLGKTY…PQHEVSQTLL (240 aa)) form the ABC transporter domain. 68–75 (GRSGAGKS) serves as a coordination point for ATP.

It belongs to the ABC transporter superfamily. Methionine importer (TC 3.A.1.24) family. The complex is composed of two ATP-binding proteins (MetN), two transmembrane proteins (MetI) and a solute-binding protein (MetQ).

Its subcellular location is the cell inner membrane. It carries out the reaction L-methionine(out) + ATP + H2O = L-methionine(in) + ADP + phosphate + H(+). The catalysed reaction is D-methionine(out) + ATP + H2O = D-methionine(in) + ADP + phosphate + H(+). In terms of biological role, part of the ABC transporter complex MetNIQ involved in methionine import. Responsible for energy coupling to the transport system. In Pseudomonas fluorescens (strain Pf0-1), this protein is Methionine import ATP-binding protein MetN 2.